A 113-amino-acid chain; its full sequence is Large ribosomal subunit protein bL19 (113 aa).

It belongs to the bacterial ribosomal protein bL19 family.

Functionally, this protein is located at the 30S-50S ribosomal subunit interface and may play a role in the structure and function of the aminoacyl-tRNA binding site. The sequence is that of Large ribosomal subunit protein bL19 from Rhodococcus erythropolis (strain PR4 / NBRC 100887).